A 382-amino-acid polypeptide reads, in one-letter code: ATP phosphoribosyltransferase regulatory subunit (382 aa).

It belongs to the class-II aminoacyl-tRNA synthetase family. HisZ subfamily. Heteromultimer composed of HisG and HisZ subunits.

The protein resides in the cytoplasm. It functions in the pathway amino-acid biosynthesis; L-histidine biosynthesis; L-histidine from 5-phospho-alpha-D-ribose 1-diphosphate: step 1/9. Its function is as follows. Required for the first step of histidine biosynthesis. May allow the feedback regulation of ATP phosphoribosyltransferase activity by histidine. This is ATP phosphoribosyltransferase regulatory subunit from Burkholderia lata (strain ATCC 17760 / DSM 23089 / LMG 22485 / NCIMB 9086 / R18194 / 383).